The sequence spans 395 residues: Probable isocitrate dehydrogenase [NAD] gamma 2, mitochondrial (395 aa).

A mitochondrion-targeting transit peptide spans 1-25 (MLAAGSCSVRTILQPALLLGHSREV). Residue Thr-117 participates in citrate binding. Residues Arg-133, Arg-164, and Asp-251 each contribute to the substrate site. Asp-251 contributes to the Mn(2+) binding site. Asn-321 serves as a coordination point for ADP.

Belongs to the isocitrate and isopropylmalate dehydrogenases family. As to quaternary structure, heterooligomer of subunits alpha (IDH3A), beta (IDH3B), and gamma (IDH3G) in the apparent ratio of 2:1:1. The heterodimer containing one IDH3A and one IDH3B subunit and the heterodimer containing one IDH3A and one IDH3G subunit assemble into a heterotetramer (which contains two subunits of IDH3A, one of IDH3B and one of IDH3G) and further into the heterooctamer. Mg(2+) serves as cofactor. It depends on Mn(2+) as a cofactor.

It localises to the mitochondrion. With respect to regulation, the heterotetramer and the heterodimer composed of IDH3A and IDH3G subunits can be allosterically activated by citrate (CIT) or/and ADP, and the two activators can act independently or synergistically. The heterodimer composed of IDH3A and IDH3B subunits cannot be allosterically regulated and the allosteric regulation of the heterotetramer is through the IDH3G subunit and not the IDH3B subunit. The IDH3G subunit contains the allosteric site which consists of a CIT-binding site and an ADP-binding site, and the binding of CIT and ADP causes conformational changes at the allosteric site which are transmitted to the active site in the catalytic subunit (IDH3A) through a cascade of conformational changes at the heterodimer interface, leading to stabilization of the isocitrate-binding at the active site and thus activation of the enzyme. ATP can activate the heterotetramer and the heterodimer composed of IDH3A and IDH3G subunits at low concentrations but inhibits their activities at high concentrations, whereas ATP exhibits only inhibitory effect on the heterodimer composed of IDH3A and IDH3B subunits. Regulatory subunit which plays a role in the allosteric regulation of the enzyme catalyzing the decarboxylation of isocitrate (ICT) into alpha-ketoglutarate. The heterodimer composed of the alpha (IDH3A) and beta (IDH3B) subunits and the heterodimer composed of the alpha (IDH3A) and gamma (IDH3G) subunits, have considerable basal activity but the full activity of the heterotetramer (containing two subunits of IDH3A, one of IDH3B and one of IDH3G) requires the assembly and cooperative function of both heterodimers. This is Probable isocitrate dehydrogenase [NAD] gamma 2, mitochondrial from Rattus norvegicus (Rat).